The sequence spans 113 residues: uncharacterized protein (113 aa).

Positions 1 to 38 (MVKIERKATDSAYHEFTKILTSSAQLMAFLNQSDFVKA) are cleaved as a signal peptide.

This is an uncharacterized protein from Haemophilus influenzae (strain ATCC 51907 / DSM 11121 / KW20 / Rd).